Reading from the N-terminus, the 317-residue chain is MNAHMLNLLVIVIFVVSFDVQALSPHYYDHTCPQADHIVTNAVKKAMSNDQTVPAALLRMHFHDCFVRGCDGSVLLDSKGKNKAEKDGPPNISLHAFYVIDNAKKALEEQCPGIVSCADILSLAARDAVALSGGPTWAVPKGRKDGRISKAIETRQLPAPTFNISQLRQNFGQRGLSMHDLVALSGGHTLGFAHCSSFQNRLHKFNTQKEVDPTLNPSFAARLEGVCPAHNTVKNAGSNMDGTVTSFDNIYYKMLIQGKSLFSSDESLLAVPSTKKLVAKYANSNEEFERAFVKSMIKMSSISGNGNEVRLNCRRVR.

The N-terminal stretch at 1–22 (MNAHMLNLLVIVIFVVSFDVQA) is a signal peptide. 4 cysteine pairs are disulfide-bonded: Cys32-Cys111, Cys65-Cys70, Cys117-Cys313, and Cys195-Cys227. His63 serves as the catalytic Proton acceptor. Asp64, Val67, Gly69, Asp71, and Ser73 together coordinate Ca(2+). Substrate is bound at residue Pro158. A glycan (N-linked (GlcNAc...) asparagine) is linked at Asn163. His188 provides a ligand contact to heme b. Thr189 contacts Ca(2+). Ca(2+) contacts are provided by Asp241, Thr243, and Asp248.

Belongs to the peroxidase family. Classical plant (class III) peroxidase subfamily. Heme b is required as a cofactor. Requires Ca(2+) as cofactor. As to expression, expressed in the whole plant, but preferentially in roots.

The protein localises to the secreted. It carries out the reaction 2 a phenolic donor + H2O2 = 2 a phenolic radical donor + 2 H2O. Removal of H(2)O(2), oxidation of toxic reductants, biosynthesis and degradation of lignin, suberization, auxin catabolism, response to environmental stresses such as wounding, pathogen attack and oxidative stress. These functions might be dependent on each isozyme/isoform in each plant tissue. The chain is Peroxidase 64 (PER64) from Arabidopsis thaliana (Mouse-ear cress).